The primary structure comprises 422 residues: Tyrosine--tRNA ligase (422 aa).

An L-tyrosine-binding site is contributed by Tyr-37. A 'HIGH' region motif is present at residues 42-51 (PTEESLHIGH). L-tyrosine is bound by residues Tyr-175 and Gln-179. The 'KMSKS' region motif lies at 235–239 (KFGKT). Lys-238 provides a ligand contact to ATP. Residues 357 to 414 (KDLQEALVLTSLAQSRTQAKNMIISNSISINTEKIRKNHIFHEKDKLFGKFTLLSRGK) form the S4 RNA-binding domain.

The protein belongs to the class-I aminoacyl-tRNA synthetase family. TyrS type 1 subfamily. In terms of assembly, homodimer.

The protein localises to the cytoplasm. It catalyses the reaction tRNA(Tyr) + L-tyrosine + ATP = L-tyrosyl-tRNA(Tyr) + AMP + diphosphate + H(+). Its function is as follows. Catalyzes the attachment of tyrosine to tRNA(Tyr) in a two-step reaction: tyrosine is first activated by ATP to form Tyr-AMP and then transferred to the acceptor end of tRNA(Tyr). The polypeptide is Tyrosine--tRNA ligase (Buchnera aphidicola subsp. Acyrthosiphon pisum (strain 5A)).